The chain runs to 178 residues: Caveolin-1 (178 aa).

S2 carries the post-translational modification N-acetylserine. Residue S2 is modified to Phosphoserine. The required for homooligomerization stretch occupies residues 2–94 (SGGKYVDSEG…WKASFTTFTV (93 aa)). At 2–104 (SGGKYVDSEG…TKYWFYRLLS (103 aa)) the chain is on the cytoplasmic side. K5 carries the N6-acetyllysine; alternate modification. K5 is covalently cross-linked (Glycyl lysine isopeptide (Lys-Gly) (interchain with G-Cter in ubiquitin); alternate). Y6 bears the Phosphotyrosine mark. A Phosphoserine modification is found at S9. Y14 carries the phosphotyrosine; by ABL1 modification. Phosphotyrosine is present on Y25. Residues K26, K30, K39, K47, and K57 each participate in a glycyl lysine isopeptide (Lys-Gly) (interchain with G-Cter in ubiquitin) cross-link. Positions 82 to 94 (DGIWKASFTTFTV) are interaction with CAVIN3. The helical intramembrane region spans 105-125 (ALFGIPMALIWGIYFAILSFL). Residues 126–178 (HIWAVVPCIKSFLIEIQCISRVYSIYVHTFCDPLFEAIGKIFSNVRINLQKEI) lie on the Cytoplasmic side of the membrane. The interval 131–142 (VPCIKSFLIEIQ) is interacts with SPRY1, SPRY2, SPRY3 and SPRY4. S-palmitoyl cysteine attachment occurs at residues C133, C143, and C156. An interacts with SPRY1, SPRY2, and SPRY4 region spans residues 149 to 160 (SIYVHTFCDPLF). An interacts with SPRY1, SPRY2, SPRY3 and SPRY4 region spans residues 167-178 (FSNVRINLQKEI).

Belongs to the caveolin family. In terms of assembly, homooligomer. Interacts with GLIPR2. Interacts with NOSTRIN. Interacts with SNAP25 and STX1A. Interacts (via the N-terminus) with DPP4; the interaction is direct. Interacts with CTNNB1, CDH1 and JUP. Interacts with PACSIN2; this interaction induces membrane tubulation. Interacts with SLC7A9. Interacts with BMX and BTK. Interacts with TGFBR1. Interacts with CAVIN3 (via leucine-zipper domain) in a cholesterol-sensitive manner. Interacts with CAVIN1. Interacts with EHD2 in a cholesterol-dependent manner. Forms a ternary complex with UBXN6 and VCP; mediates CAV1 targeting to lysosomes for degradation. Interacts with ABCG1; this interaction regulates ABCG1-mediated cholesterol efflux. Interacts with NEU3; this interaction enhances NEU3 sialidase activity within caveola. Interacts (via C-terminus) with SPRY1, SPRY2 (via C-terminus), SPRY3, and SPRY4. Interacts with IGFBP5; this interaction allows trafficking of IGFBP5 from the plasma membrane to the nucleus. Phosphorylated at Tyr-14 by ABL1 in response to oxidative stress. In terms of processing, ubiquitinated. Undergo monoubiquitination and multi- and/or polyubiquitination. Monoubiquitination of N-terminal lysines promotes integration in a ternary complex with UBXN6 and VCP which promotes oligomeric CAV1 targeting to lysosomes for degradation. Ubiquitinated by ZNRF1; leading to degradation and modulation of the TLR4-mediated immune response.

Its subcellular location is the golgi apparatus membrane. It localises to the cell membrane. It is found in the membrane. The protein resides in the caveola. The protein localises to the membrane raft. Functionally, may act as a scaffolding protein within caveolar membranes. Forms a stable heterooligomeric complex with CAV2 that targets to lipid rafts and drives caveolae formation. Mediates the recruitment of CAVIN proteins (CAVIN1/2/3/4) to the caveolae. Interacts directly with G-protein alpha subunits and can functionally regulate their activity. Involved in the costimulatory signal essential for T-cell receptor (TCR)-mediated T-cell activation. Its binding to DPP4 induces T-cell proliferation and NF-kappa-B activation in a T-cell receptor/CD3-dependent manner. Recruits CTNNB1 to caveolar membranes and may regulate CTNNB1-mediated signaling through the Wnt pathway. Negatively regulates TGFB1-mediated activation of SMAD2/3 by mediating the internalization of TGFBR1 from membrane rafts leading to its subsequent degradation. Binds 20(S)-hydroxycholesterol (20(S)-OHC). This Equus caballus (Horse) protein is Caveolin-1 (CAV1).